The following is a 288-amino-acid chain: 4-diphosphocytidyl-2-C-methyl-D-erythritol kinase (288 aa).

Lysine 8 is an active-site residue. 90–100 (PLEAGLAGGSA) contacts ATP. Aspartate 132 is an active-site residue.

The protein belongs to the GHMP kinase family. IspE subfamily.

The catalysed reaction is 4-CDP-2-C-methyl-D-erythritol + ATP = 4-CDP-2-C-methyl-D-erythritol 2-phosphate + ADP + H(+). It participates in isoprenoid biosynthesis; isopentenyl diphosphate biosynthesis via DXP pathway; isopentenyl diphosphate from 1-deoxy-D-xylulose 5-phosphate: step 3/6. Catalyzes the phosphorylation of the position 2 hydroxy group of 4-diphosphocytidyl-2C-methyl-D-erythritol. This chain is 4-diphosphocytidyl-2-C-methyl-D-erythritol kinase, found in Carboxydothermus hydrogenoformans (strain ATCC BAA-161 / DSM 6008 / Z-2901).